Reading from the N-terminus, the 303-residue chain is D-alanine--D-alanine ligase (303 aa).

Positions 104–300 (KLLWNAVGLP…FERLVERVLE (197 aa)) constitute an ATP-grasp domain. 132-187 (IAKLGLPLFVKPASEGSSVGVSKVKTAEQLLPAIEEALKYDSIVLVEENLAGAEYS) serves as a coordination point for ATP. Asp254, Glu267, and Asn269 together coordinate Mg(2+).

The protein belongs to the D-alanine--D-alanine ligase family. Requires Mg(2+) as cofactor. It depends on Mn(2+) as a cofactor.

It is found in the cytoplasm. It catalyses the reaction 2 D-alanine + ATP = D-alanyl-D-alanine + ADP + phosphate + H(+). It participates in cell wall biogenesis; peptidoglycan biosynthesis. Its function is as follows. Cell wall formation. The protein is D-alanine--D-alanine ligase of Glaesserella parasuis serovar 5 (strain SH0165) (Haemophilus parasuis).